The sequence spans 182 residues: Lipoprotein signal peptidase (182 aa).

The next 4 helical transmembrane spans lie at 12-32 (FLWISALAFILDQWSKYTVID), 40-60 (IQVLPFFNFTYVHNYGAAFSF), 70-90 (WFFTAIAVVVSVVILWWLKQS), and 97-117 (LPVAFAFILGGALGNVYDRLV). Catalysis depends on residues Asp-123 and Asp-141. The chain crosses the membrane as a helical span at residues 136 to 156 (AFNIADSAIFIGAALLIIDMF). The tract at residues 161–182 (KKSEENGAESKAGSANSSETIK) is disordered. Polar residues predominate over residues 173–182 (GSANSSETIK).

The protein belongs to the peptidase A8 family.

It localises to the cell inner membrane. It catalyses the reaction Release of signal peptides from bacterial membrane prolipoproteins. Hydrolyzes -Xaa-Yaa-Zaa-|-(S,diacylglyceryl)Cys-, in which Xaa is hydrophobic (preferably Leu), and Yaa (Ala or Ser) and Zaa (Gly or Ala) have small, neutral side chains.. Its pathway is protein modification; lipoprotein biosynthesis (signal peptide cleavage). This protein specifically catalyzes the removal of signal peptides from prolipoproteins. The protein is Lipoprotein signal peptidase of Alteromonas mediterranea (strain DSM 17117 / CIP 110805 / LMG 28347 / Deep ecotype).